Reading from the N-terminus, the 378-residue chain is Cytochrome b (378 aa).

The next 4 membrane-spanning stretches (helical) occupy residues 32-52 (FGSLLGLCLVIQILTGLFLAM), 76-97 (WLIRYMHANGASMFFICLFLHV), 112-132 (WNIGVILLFAVMATAFMGYVL), and 177-197 (FFAFHFILPFIVAALVMVHLL). Residues histidine 82 and histidine 96 each coordinate heme b. Positions 181 and 195 each coordinate heme b. Histidine 200 lines the a ubiquinone pocket. 4 helical membrane passes run 225 to 245 (IKDALGIFLLLLLFMTLVLFF), 287 to 307 (LGGVLALIFSILILMMFPILH), 319 to 339 (LSQCLFWILVADLFTLTWIGG), and 346 to 366 (FITIGQVASIIYFVIILFALP).

Belongs to the cytochrome b family. As to quaternary structure, the cytochrome bc1 complex contains 11 subunits: 3 respiratory subunits (MT-CYB, CYC1 and UQCRFS1), 2 core proteins (UQCRC1 and UQCRC2) and 6 low-molecular weight proteins (UQCRH/QCR6, UQCRB/QCR7, UQCRQ/QCR8, UQCR10/QCR9, UQCR11/QCR10 and a cleavage product of UQCRFS1). This cytochrome bc1 complex then forms a dimer. Heme b serves as cofactor.

Its subcellular location is the mitochondrion inner membrane. Component of the ubiquinol-cytochrome c reductase complex (complex III or cytochrome b-c1 complex) that is part of the mitochondrial respiratory chain. The b-c1 complex mediates electron transfer from ubiquinol to cytochrome c. Contributes to the generation of a proton gradient across the mitochondrial membrane that is then used for ATP synthesis. The polypeptide is Cytochrome b (MT-CYB) (Sciurus aberti (Abert's squirrel)).